Consider the following 349-residue polypeptide: N-acetyl-gamma-glutamyl-phosphate reductase (349 aa).

Cys-149 is a catalytic residue.

Belongs to the NAGSA dehydrogenase family. Type 1 subfamily.

It localises to the cytoplasm. It catalyses the reaction N-acetyl-L-glutamate 5-semialdehyde + phosphate + NADP(+) = N-acetyl-L-glutamyl 5-phosphate + NADPH + H(+). The protein operates within amino-acid biosynthesis; L-arginine biosynthesis; N(2)-acetyl-L-ornithine from L-glutamate: step 3/4. In terms of biological role, catalyzes the NADPH-dependent reduction of N-acetyl-5-glutamyl phosphate to yield N-acetyl-L-glutamate 5-semialdehyde. The polypeptide is N-acetyl-gamma-glutamyl-phosphate reductase (Acinetobacter baumannii (strain SDF)).